A 271-amino-acid polypeptide reads, in one-letter code: MINKDTQLCMSLSGRPSNFGTTFHNYLYDKLGLNFIYKAFTTQDIEHAIKGVRALGIRGCAVSMPFKETCMPFLDEIHPSAQAIESVNTIVNDNGFLRAYNTDYIAIVKLIEKYHLNKNAKVIVHGSGGMAKAVVAAFKNSGFEKLKIYARNVKTGQYLAALYGYAYINSLENQQADILVNVTSIGMKGGKEEMDLAFPKAFIDNASVAFDVVAMPVETPFIRYAQARGKQTISGAAVIVLQAVEQFELYTHQRPSDELIAEAAAFARTKF.

The active-site Proton donor/acceptor is the K67. A substrate-binding site is contributed by D103. Residues 126–130 (GSGGM), K154, and S184 contribute to the NADP(+) site.

Belongs to the shikimate dehydrogenase-like family. Homodimer.

It catalyses the reaction shikimate + NADP(+) = 3-dehydroshikimate + NADPH + H(+). Functionally, in vitro, is able to catalyze the NADP(+)-dependent oxidation of shikimate to 3-dehydroshikimate. However, has much lower activity than classical shikimate dehydrogenases AroE, indicating that shikimate may not be the biological substrate. Cannot utilize NAD(+) instead of NADP(+). Is not able to catalyze the oxidation of quinate. This chain is Shikimate dehydrogenase-like protein HI_0607, found in Haemophilus influenzae (strain ATCC 51907 / DSM 11121 / KW20 / Rd).